A 125-amino-acid polypeptide reads, in one-letter code: Large ribosomal subunit protein bL12 (125 aa).

Homodimer. Part of the ribosomal stalk of the 50S ribosomal subunit. Forms a multimeric L10(L12)X complex, where L10 forms an elongated spine to which 2 to 4 L12 dimers bind in a sequential fashion. Binds GTP-bound translation factors. Two isoforms seem to exist. One is probably dimethylated on Lys-69 and monomethylated on Lys-86 while the other is probably acetylated or trimethylated on both Lys-86 and Lys-89.

In terms of biological role, forms part of the ribosomal stalk which helps the ribosome interact with GTP-bound translation factors. Is thus essential for accurate translation. In Rhodopseudomonas palustris (strain ATCC BAA-98 / CGA009), this protein is Large ribosomal subunit protein bL12.